Here is a 264-residue protein sequence, read N- to C-terminus: Elongation factor Ts (264 aa).

Positions 76–79 (TDFV) are involved in Mg(2+) ion dislocation from EF-Tu.

The protein belongs to the EF-Ts family.

The protein resides in the cytoplasm. Functionally, associates with the EF-Tu.GDP complex and induces the exchange of GDP to GTP. It remains bound to the aminoacyl-tRNA.EF-Tu.GTP complex up to the GTP hydrolysis stage on the ribosome. This chain is Elongation factor Ts, found in Deinococcus radiodurans (strain ATCC 13939 / DSM 20539 / JCM 16871 / CCUG 27074 / LMG 4051 / NBRC 15346 / NCIMB 9279 / VKM B-1422 / R1).